A 534-amino-acid chain; its full sequence is NEDD8-activating enzyme E1 regulatory subunit (534 aa).

A2 bears the N-acetylalanine mark. Residues K6 and K341 each carry the N6-acetyllysine modification. The segment at 331–344 (DMIADSNKYIKLQN) is interaction with UBA3.

The protein belongs to the ubiquitin-activating E1 family. ULA1 subfamily. In terms of assembly, heterodimer of UBA3 and NAE1. The complex binds NEDD8 and UBE2M. Binds APP and TP53BP2. In terms of processing, ubiquitinated by TRIP12, leading to its degradation by the proteasome. In terms of tissue distribution, expressed throughout the brain. In hippocampus, strongly expressed in granule cells and in the pyramidal cell layer. Strongly expressed in the piriform cortex. In the cerebellum, expressed only in Purkinje cells.

Its subcellular location is the cell membrane. It participates in protein modification; protein neddylation. Its activity is regulated as follows. Binding of TP53BP2 to the regulatory subunit NAE1 decreases neddylation activity. Its function is as follows. Regulatory subunit of the dimeric UBA3-NAE1 E1 enzyme. E1 activates NEDD8 by first adenylating its C-terminal glycine residue with ATP, thereafter linking this residue to the side chain of the catalytic cysteine, yielding a NEDD8-UBA3 thioester and free AMP. E1 finally transfers NEDD8 to the catalytic cysteine of UBE2M. Necessary for cell cycle progression through the S-M checkpoint. Overexpression of NAE1 causes apoptosis through deregulation of NEDD8 conjugation. The covalent attachment of NEDD8 to target proteins is known as 'neddylation' and the process is involved in the regulation of cell growth, viability and development. This chain is NEDD8-activating enzyme E1 regulatory subunit (Nae1), found in Rattus norvegicus (Rat).